A 288-amino-acid chain; its full sequence is ATP synthase gamma chain (288 aa).

The protein belongs to the ATPase gamma chain family. As to quaternary structure, F-type ATPases have 2 components, CF(1) - the catalytic core - and CF(0) - the membrane proton channel. CF(1) has five subunits: alpha(3), beta(3), gamma(1), delta(1), epsilon(1). CF(0) has three main subunits: a, b and c.

Its subcellular location is the cell inner membrane. Produces ATP from ADP in the presence of a proton gradient across the membrane. The gamma chain is believed to be important in regulating ATPase activity and the flow of protons through the CF(0) complex. The protein is ATP synthase gamma chain of Haemophilus ducreyi (strain 35000HP / ATCC 700724).